A 188-amino-acid chain; its full sequence is RxLR effector protein Avh241 (188 aa).

Residues 1–16 (MRQYCLLLIVLALAAA) form the signal peptide. The RxLR-dEER motif lies at 43 to 58 (RLLRSEPQDEDTFEDR). The short motif at 73–78 (GAAKAK) is the Host plasma membrane localization motif element.

This sequence belongs to the RxLR effector family.

It is found in the secreted. The protein resides in the host cell membrane. Its function is as follows. Effector that triggers cell death in a variety of plant species (including tobacco, tomato and soybean), regardless of the Rps genes present. Avh241 interacts with the plant immune system via at least two different mechanisms, one recognized by plants dependent on subcellular localization and one promoting infection independent on membrane localization. The cell death triggered by Avh241 in N.benthamiana requires the two host mitogen-activated protein kinases, MEK2 and WIPK. This Phytophthora sojae (strain P6497) (Soybean stem and root rot agent) protein is RxLR effector protein Avh241.